Here is a 216-residue protein sequence, read N- to C-terminus: MIHLEGITKSFGSLQVLKGIDLEITQGEVVSIVGPSGAGKTTLLQIMGTLDSPDTGMINIDGTNVSRMKEKELSAFRNKHIGFVFQFHQLLPEFTALENVMIPAFIAGVPTKEASMRAMEILDFMGLKERASHKPNELSGGEKQRVAVARALINQPAVILADEPSGSLDSHNKEELHQLFFDLRNRFGQTFVIVTHDEALAKITDRTIHMVDGNII.

The 215-residue stretch at 2 to 216 (IHLEGITKSF…TIHMVDGNII (215 aa)) folds into the ABC transporter domain. 34-41 (GPSGAGKT) lines the ATP pocket.

Belongs to the ABC transporter superfamily. Lipoprotein translocase (TC 3.A.1.125) family. In terms of assembly, the complex is composed of two ATP-binding proteins (LolD) and two transmembrane proteins (LolC and LolE).

Its subcellular location is the cell inner membrane. Functionally, part of the ABC transporter complex LolCDE involved in the translocation of mature outer membrane-directed lipoproteins, from the inner membrane to the periplasmic chaperone, LolA. Responsible for the formation of the LolA-lipoprotein complex in an ATP-dependent manner. In Bacteroides fragilis (strain YCH46), this protein is Lipoprotein-releasing system ATP-binding protein LolD.